Consider the following 76-residue polypeptide: Large ribosomal subunit protein bL31 (76 aa).

This sequence belongs to the bacterial ribosomal protein bL31 family. Type A subfamily. Part of the 50S ribosomal subunit.

Its function is as follows. Binds the 23S rRNA. The polypeptide is Large ribosomal subunit protein bL31 (rpmE) (Pelagibacter ubique (strain HTCC1062)).